Reading from the N-terminus, the 196-residue chain is ATP-dependent Clp protease proteolytic subunit (196 aa).

Ser-96 (nucleophile) is an active-site residue. Residue His-121 is part of the active site.

This sequence belongs to the peptidase S14 family. As to quaternary structure, fourteen ClpP subunits assemble into 2 heptameric rings which stack back to back to give a disk-like structure with a central cavity, resembling the structure of eukaryotic proteasomes.

Its subcellular location is the cytoplasm. The enzyme catalyses Hydrolysis of proteins to small peptides in the presence of ATP and magnesium. alpha-casein is the usual test substrate. In the absence of ATP, only oligopeptides shorter than five residues are hydrolyzed (such as succinyl-Leu-Tyr-|-NHMec, and Leu-Tyr-Leu-|-Tyr-Trp, in which cleavage of the -Tyr-|-Leu- and -Tyr-|-Trp bonds also occurs).. In terms of biological role, cleaves peptides in various proteins in a process that requires ATP hydrolysis. Has a chymotrypsin-like activity. Plays a major role in the degradation of misfolded proteins. This Streptococcus agalactiae serotype III (strain NEM316) protein is ATP-dependent Clp protease proteolytic subunit.